A 54-amino-acid chain; its full sequence is Large ribosomal subunit protein bL33 (54 aa).

This sequence belongs to the bacterial ribosomal protein bL33 family.

The chain is Large ribosomal subunit protein bL33 from Symbiobacterium thermophilum (strain DSM 24528 / JCM 14929 / IAM 14863 / T).